The primary structure comprises 74 residues: Cytochrome c oxidase copper chaperone 1 (74 aa).

The segment at 1–30 (MTDQPAQNGLIPPPTSEPSKAAASAETKPK) is disordered. Cys34 and Cys35 together coordinate Cu cation. Positions 34–74 (CCACPDTKKLRDECIVEHGESACTKWIEAHKICLRAEGFNV) constitute a CHCH domain. 2 consecutive short sequence motifs (cx9C motif) follow at residues 37-47 (CPDTKKLRDEC) and 56-66 (CTKWIEAHKIC). 2 disulfide bridges follow: Cys37-Cys66 and Cys47-Cys56.

This sequence belongs to the COX17 family.

It localises to the mitochondrion intermembrane space. Its function is as follows. Copper chaperone for cytochrome c oxidase (COX). Binds 2 copper ions and delivers them to the Cu(A) site of COX. Can complement the yeast mutant cox17. This is Cytochrome c oxidase copper chaperone 1 (COX17-1) from Arabidopsis thaliana (Mouse-ear cress).